Here is a 397-residue protein sequence, read N- to C-terminus: CCA-adding enzyme (397 aa).

2 residues coordinate ATP: Gly26 and Arg29. Positions 26 and 29 each coordinate CTP. 2 residues coordinate Mg(2+): Asp39 and Asp41. ATP contacts are provided by Arg110, Asp153, Arg156, Arg159, and Arg162. CTP contacts are provided by Arg110, Asp153, Arg156, Arg159, and Arg162.

Belongs to the tRNA nucleotidyltransferase/poly(A) polymerase family. Bacterial CCA-adding enzyme type 3 subfamily. In terms of assembly, homodimer. Mg(2+) is required as a cofactor.

It carries out the reaction a tRNA precursor + 2 CTP + ATP = a tRNA with a 3' CCA end + 3 diphosphate. The enzyme catalyses a tRNA with a 3' CCA end + 2 CTP + ATP = a tRNA with a 3' CCACCA end + 3 diphosphate. Its function is as follows. Catalyzes the addition and repair of the essential 3'-terminal CCA sequence in tRNAs without using a nucleic acid template. Adds these three nucleotides in the order of C, C, and A to the tRNA nucleotide-73, using CTP and ATP as substrates and producing inorganic pyrophosphate. tRNA 3'-terminal CCA addition is required both for tRNA processing and repair. Also involved in tRNA surveillance by mediating tandem CCA addition to generate a CCACCA at the 3' terminus of unstable tRNAs. While stable tRNAs receive only 3'-terminal CCA, unstable tRNAs are marked with CCACCA and rapidly degraded. This Bacillus thuringiensis subsp. konkukian (strain 97-27) protein is CCA-adding enzyme.